Reading from the N-terminus, the 194-residue chain is DNA replication complex GINS protein PSF3 (194 aa).

Belongs to the GINS3/PSF3 family. In terms of assembly, component of the GINS complex which is a heterotetramer of SLD5, PSF1, PSF2 and PSF3.

It localises to the nucleus. Its function is as follows. Functions as part of the GINS complex which plays an essential role in the initiation of DNA replication by binding to DNA replication origins and facilitating the assembly of the DNA replication machinery. The protein is DNA replication complex GINS protein PSF3 of Saccharomyces cerevisiae (strain ATCC 204508 / S288c) (Baker's yeast).